Reading from the N-terminus, the 307-residue chain is tRNA pseudouridine synthase B (307 aa).

Asp38 (nucleophile) is an active-site residue.

This sequence belongs to the pseudouridine synthase TruB family. Type 1 subfamily.

The catalysed reaction is uridine(55) in tRNA = pseudouridine(55) in tRNA. Functionally, responsible for synthesis of pseudouridine from uracil-55 in the psi GC loop of transfer RNAs. This chain is tRNA pseudouridine synthase B, found in Bacillus cereus (strain ATCC 10987 / NRS 248).